We begin with the raw amino-acid sequence, 355 residues long: Beta-porphyranase C (355 aa).

An N-terminal signal peptide occupies residues 1-18; the sequence is MIKTLKRIPLVFLIAIMA. Residue cysteine 19 is the site of N-palmitoyl cysteine attachment. Cysteine 19 is lipidated: S-diacylglycerol cysteine. The interval 22-72 is disordered; the sequence is SGDNGKDKVEEQEQAQEQGEKKGQGEERDKEDGIDGLQPTFLADQDPKPDD. Over residues 39 to 54 the composition is skewed to basic and acidic residues; that stretch reads QGEKKGQGEERDKEDG. A GH16 domain is found at 71–355; it reads DDKKWIKVEG…WVRVWQLEDL (285 aa). Tryptophan 110, glutamate 208, and glutamate 213 together coordinate substrate. Glutamate 208 acts as the Nucleophile in catalysis. Glutamate 213 functions as the Proton donor in the catalytic mechanism.

Belongs to the glycosyl hydrolase 16 family.

The protein resides in the cell outer membrane. It catalyses the reaction Hydrolysis of beta-D-galactopyranose-(1-&gt;4)-alpha-L-galactopyranose-6-sulfate linkages in porphyran.. Functionally, cleaves the sulfated polysaccharide porphyran at the (1-&gt;4) linkages between beta-D-galactopyranose and alpha-L-galactopyranose-6-sulfate, forming mostly the disaccharide alpha-L-galactopyranose-6-sulfate-(1-&gt;3)-beta-D-galactose. The sequence is that of Beta-porphyranase C (porC) from Zobellia galactanivorans (strain DSM 12802 / CCUG 47099 / CIP 106680 / NCIMB 13871 / Dsij).